A 397-amino-acid chain; its full sequence is Probable protein phosphatase 2C 74 (397 aa).

The PPM-type phosphatase domain maps to 133-391; it reads GFWVASRRGL…DDVTVMVVDL (259 aa). Mn(2+)-binding residues include D170, G171, D343, and D382.

The protein belongs to the PP2C family. Mg(2+) is required as a cofactor. Mn(2+) serves as cofactor.

It catalyses the reaction O-phospho-L-seryl-[protein] + H2O = L-seryl-[protein] + phosphate. The enzyme catalyses O-phospho-L-threonyl-[protein] + H2O = L-threonyl-[protein] + phosphate. This chain is Probable protein phosphatase 2C 74, found in Oryza sativa subsp. japonica (Rice).